The following is a 762-amino-acid chain: Lysyl oxidase homolog 2B (762 aa).

Residues 1–20 (MLALWSISFVLLCSWRLSYA) form the signal peptide. SRCR domains lie at 53–154 (LRLA…VVCS), 183–292 (IRPI…VSCI), 316–417 (VRLR…VKCN), and 427–536 (LRLS…VSCS). 9 disulfides stabilise this stretch: Cys-79–Cys-143, Cys-92–Cys-153, Cys-123–Cys-133, Cys-213–Cys-281, Cys-226–Cys-291, Cys-260–Cys-270, Cys-341–Cys-406, Cys-354–Cys-416, and Cys-385–Cys-395. Asn-278 carries an N-linked (GlcNAc...) asparagine glycan. Asn-447 carries N-linked (GlcNAc...) asparagine glycosylation. Cystine bridges form between Cys-456–Cys-522, Cys-469–Cys-535, and Cys-503–Cys-513. The lysyl-oxidase like stretch occupies residues 540 to 742 (PDLVLNPQVV…WMYNCHIGGS (203 aa)). Residues Asp-541 and Leu-542 each contribute to the Ca(2+) site. Cystine bridges form between Cys-565–Cys-616, Cys-571–Cys-686, Cys-648–Cys-664, and Cys-654–Cys-676. The Cu cation site is built by His-617, His-619, and His-621. The N-linked (GlcNAc...) asparagine glycan is linked to Asn-635. Positions 644–680 (KASFCLEDSECDEGIEKRYECANFGEQGITVGCWDTY) form a cross-link, lysine tyrosylquinone (Lys-Tyr). Tyr-680 is modified (2',4',5'-topaquinone). Residues Glu-713, Asp-715, Asn-718, and Asn-719 each contribute to the Ca(2+) site. Residues Cys-723 and Cys-737 are joined by a disulfide bond.

The protein belongs to the lysyl oxidase family. The cofactor is Cu cation. Requires lysine tyrosylquinone residue as cofactor. Post-translationally, the lysine tyrosylquinone cross-link (LTQ) is generated by condensation of the epsilon-amino group of a lysine with a topaquinone produced by oxidation of tyrosine.

The protein resides in the secreted. Its subcellular location is the extracellular space. It localises to the extracellular matrix. It is found in the basement membrane. The protein localises to the nucleus. The protein resides in the chromosome. Its subcellular location is the endoplasmic reticulum. The enzyme catalyses L-lysyl-[protein] + O2 + H2O = (S)-2-amino-6-oxohexanoyl-[protein] + H2O2 + NH4(+). Functionally, mediates the post-translational oxidative deamination of lysine residues on target proteins leading to the formation of deaminated lysine (allysine). Acts as a transcription corepressor and specifically mediates deamination of trimethylated 'Lys-4' of histone H3 (H3K4me3), a specific tag for epigenetic transcriptional activation. Shows no activity against histone H3 when it is trimethylated on 'Lys-9' (H3K9me3) or 'Lys-27' (H3K27me3) or when 'Lys-4' is monomethylated (H3K4me1) or dimethylated (H3K4me2). Also mediates deamination of methylated TAF10, a member of the transcription factor IID (TFIID) complex, which induces release of TAF10 from promoters, leading to inhibition of TFIID-dependent transcription. LOXL2-mediated deamination of TAF10 results in transcriptional repression of genes required for embryonic stem cell pluripotency. Involved in epithelial to mesenchymal transition (EMT) and participates in repression of E-cadherin, probably by mediating deamination of histone H3. When secreted into the extracellular matrix, promotes cross-linking of extracellular matrix proteins by mediating oxidative deamination of peptidyl lysine residues in precursors to fibrous collagen and elastin. Acts as a regulator of sprouting angiogenesis, probably via collagen IV scaffolding. Acts as a regulator of chondrocyte differentiation, probably by regulating expression of factors that control chondrocyte differentiation. Required with loxl2a for correct expression of Sox2 and for neural differentiation. The sequence is that of Lysyl oxidase homolog 2B (loxl2b) from Danio rerio (Zebrafish).